The primary structure comprises 512 residues: Cobyric acid synthase (512 aa).

Residues 251–451 form the GATase cobBQ-type domain; it reads ALDITVIRLP…IHGLFDSANF (201 aa). The active-site Nucleophile is Cys332. Residue His443 is part of the active site.

Belongs to the CobB/CobQ family. CobQ subfamily.

It functions in the pathway cofactor biosynthesis; adenosylcobalamin biosynthesis. Its function is as follows. Catalyzes amidations at positions B, D, E, and G on adenosylcobyrinic A,C-diamide. NH(2) groups are provided by glutamine, and one molecule of ATP is hydrogenolyzed for each amidation. This is Cobyric acid synthase from Photorhabdus laumondii subsp. laumondii (strain DSM 15139 / CIP 105565 / TT01) (Photorhabdus luminescens subsp. laumondii).